The primary structure comprises 504 residues: Maturase K (504 aa).

The protein belongs to the intron maturase 2 family. MatK subfamily.

It is found in the plastid. The protein localises to the chloroplast. Its function is as follows. Usually encoded in the trnK tRNA gene intron. Probably assists in splicing its own and other chloroplast group II introns. The protein is Maturase K of Carpinus betulus (European hornbeam).